The following is a 372-amino-acid chain: Alanine dehydrogenase 1 (372 aa).

Residue histidine 94 is part of the active site. An NAD(+)-binding site is contributed by 170–200 (TYVIFGGGVAATNAANVALGLNAKVIIIELN).

It belongs to the AlaDH/PNT family.

The enzyme catalyses L-alanine + NAD(+) + H2O = pyruvate + NH4(+) + NADH + H(+). It functions in the pathway amino-acid degradation; L-alanine degradation via dehydrogenase pathway; NH(3) and pyruvate from L-alanine: step 1/1. Functionally, may play a role in cell wall synthesis as L-alanine is an important constituent of the peptidoglycan layer. The polypeptide is Alanine dehydrogenase 1 (ald1) (Staphylococcus aureus (strain MRSA252)).